The sequence spans 21 residues: 5-methyltetrahydropteroyltriglutamate--homocysteine methyltransferase (21 aa).

The protein belongs to the vitamin-B12 independent methionine synthase family. The cofactor is Zn(2+).

The protein localises to the cytoplasm. The enzyme catalyses 5-methyltetrahydropteroyltri-L-glutamate + L-homocysteine = tetrahydropteroyltri-L-glutamate + L-methionine. Its pathway is amino-acid biosynthesis; L-methionine biosynthesis via de novo pathway; L-methionine from L-homocysteine (MetE route): step 1/1. Its function is as follows. Catalyzes the transfer of a methyl group from 5-methyltetrahydrofolate to homocysteine resulting in methionine formation. This is 5-methyltetrahydropteroyltriglutamate--homocysteine methyltransferase from Populus euphratica (Euphrates poplar).